The primary structure comprises 199 residues: MKMNAKFISSYDDYQKCPEITKPEYAFIGRSNVGKSSLINSLTGVKNLAMTSSKPGKTQLINLFTIEETWILADLPGYGFAKASQSSRIKWGRMVHDYLKNRTNLTTVFLLVDSRHEPMKSDLEQITWLASNGIPFSLIFTKIDKQSLTQTNKILASWTKVLSENWEELPKMFLTSSESGKGTEELLTYIDEINKQIAN.

In terms of domain architecture, EngB-type G spans 21-196 (TKPEYAFIGR…LTYIDEINKQ (176 aa)). GTP-binding positions include 29-36 (GRSNVGKS), 56-60 (GKTQL), 74-77 (DLPG), 141-144 (TKID), and 175-177 (TSS). The Mg(2+) site is built by Ser36 and Thr58.

Belongs to the TRAFAC class TrmE-Era-EngA-EngB-Septin-like GTPase superfamily. EngB GTPase family. Mg(2+) serves as cofactor.

Its function is as follows. Necessary for normal cell division and for the maintenance of normal septation. This chain is Probable GTP-binding protein EngB, found in Cytophaga hutchinsonii (strain ATCC 33406 / DSM 1761 / CIP 103989 / NBRC 15051 / NCIMB 9469 / D465).